The chain runs to 81 residues: UPF0180 protein ABC2430 (81 aa).

This sequence belongs to the UPF0180 family.

The protein is UPF0180 protein ABC2430 of Shouchella clausii (strain KSM-K16) (Alkalihalobacillus clausii).